The chain runs to 232 residues: MASRKPNPDQLGLLLSQEPAAKRARRILCGVDEAGRGPLAGPVTAAAVVLNPRKPIKGLADSKILTARKREALYDEIVEKALAWHVAEATVEEIDRINILHATMLAMQRAVQGVAALGTLPDLVQVDGNRCPQVAFAVEAIVKGDALVPAISAASILAKVTRDRQLAALHIEFPLYGFDVHAGYGTPQHLAAIDLHGVTPHHRRSFAPVRRALEGMSAISIETVAAGSAWDD.

Residues 26-218 (RILCGVDEAG…VRRALEGMSA (193 aa)) enclose the RNase H type-2 domain. Residues Asp-32, Glu-33, and Asp-127 each coordinate a divalent metal cation.

The protein belongs to the RNase HII family. The cofactor is Mn(2+). It depends on Mg(2+) as a cofactor.

The protein localises to the cytoplasm. It carries out the reaction Endonucleolytic cleavage to 5'-phosphomonoester.. Its function is as follows. Endonuclease that specifically degrades the RNA of RNA-DNA hybrids. In Ralstonia pickettii (strain 12J), this protein is Ribonuclease HII.